We begin with the raw amino-acid sequence, 400 residues long: Formate-dependent phosphoribosylglycinamide formyltransferase (400 aa).

N(1)-(5-phospho-beta-D-ribosyl)glycinamide-binding positions include 22 to 23 (EL) and E82. ATP-binding positions include R115, K156, 161–166 (SSGKGQ), 196–199 (EGFI), and E204. The ATP-grasp domain occupies 120 to 309 (RLAAETLCLP…EFALHARAIL (190 aa)). Residues E268 and E280 each contribute to the Mg(2+) site. N(1)-(5-phospho-beta-D-ribosyl)glycinamide contacts are provided by residues D287, K361, and 368-369 (RR).

Belongs to the PurK/PurT family. In terms of assembly, homodimer.

The catalysed reaction is N(1)-(5-phospho-beta-D-ribosyl)glycinamide + formate + ATP = N(2)-formyl-N(1)-(5-phospho-beta-D-ribosyl)glycinamide + ADP + phosphate + H(+). Its pathway is purine metabolism; IMP biosynthesis via de novo pathway; N(2)-formyl-N(1)-(5-phospho-D-ribosyl)glycinamide from N(1)-(5-phospho-D-ribosyl)glycinamide (formate route): step 1/1. In terms of biological role, involved in the de novo purine biosynthesis. Catalyzes the transfer of formate to 5-phospho-ribosyl-glycinamide (GAR), producing 5-phospho-ribosyl-N-formylglycinamide (FGAR). Formate is provided by PurU via hydrolysis of 10-formyl-tetrahydrofolate. This is Formate-dependent phosphoribosylglycinamide formyltransferase from Xanthomonas euvesicatoria pv. vesicatoria (strain 85-10) (Xanthomonas campestris pv. vesicatoria).